We begin with the raw amino-acid sequence, 206 residues long: LexA repressor (206 aa).

A DNA-binding region (H-T-H motif) is located at residues Arg-28–Lys-48. Residues Ser-123 and Lys-160 each act as for autocatalytic cleavage activity in the active site.

The protein belongs to the peptidase S24 family. In terms of assembly, homodimer.

The catalysed reaction is Hydrolysis of Ala-|-Gly bond in repressor LexA.. In terms of biological role, represses a number of genes involved in the response to DNA damage (SOS response), including recA and lexA. In the presence of single-stranded DNA, RecA interacts with LexA causing an autocatalytic cleavage which disrupts the DNA-binding part of LexA, leading to derepression of the SOS regulon and eventually DNA repair. This is LexA repressor from Shewanella sp. (strain ANA-3).